The following is a 413-amino-acid chain: Multifunctional CCA protein (413 aa).

The ATP site is built by G8 and R11. CTP contacts are provided by G8 and R11. Residues D21 and D23 each coordinate Mg(2+). Positions 91, 137, and 140 each coordinate ATP. CTP contacts are provided by R91, R137, and R140. One can recognise an HD domain in the interval 228 to 329 (TGKHTLLSLK…VSLFDKGDFW (102 aa)).

Belongs to the tRNA nucleotidyltransferase/poly(A) polymerase family. Bacterial CCA-adding enzyme type 1 subfamily. As to quaternary structure, monomer. Can also form homodimers and oligomers. Requires Mg(2+) as cofactor. The cofactor is Ni(2+).

It carries out the reaction a tRNA precursor + 2 CTP + ATP = a tRNA with a 3' CCA end + 3 diphosphate. The catalysed reaction is a tRNA with a 3' CCA end + 2 CTP + ATP = a tRNA with a 3' CCACCA end + 3 diphosphate. Catalyzes the addition and repair of the essential 3'-terminal CCA sequence in tRNAs without using a nucleic acid template. Adds these three nucleotides in the order of C, C, and A to the tRNA nucleotide-73, using CTP and ATP as substrates and producing inorganic pyrophosphate. tRNA 3'-terminal CCA addition is required both for tRNA processing and repair. Also involved in tRNA surveillance by mediating tandem CCA addition to generate a CCACCA at the 3' terminus of unstable tRNAs. While stable tRNAs receive only 3'-terminal CCA, unstable tRNAs are marked with CCACCA and rapidly degraded. The chain is Multifunctional CCA protein from Shewanella denitrificans (strain OS217 / ATCC BAA-1090 / DSM 15013).